Here is a 76-residue protein sequence, read N- to C-terminus: Defensin-like protein 5 (76 aa).

The N-terminal stretch at 1 to 29 is a signal peptide; it reads MKVSPRLNSALLLLFMILATVMGLVTVEA. Disulfide bonds link Cys32–Cys76, Cys43–Cys63, Cys49–Cys70, and Cys53–Cys72.

Belongs to the DEFL family.

Its subcellular location is the secreted. Its function is as follows. Confers broad-spectrum resistance to pathogens. This chain is Defensin-like protein 5 (PDF2.4), found in Arabidopsis thaliana (Mouse-ear cress).